The primary structure comprises 275 residues: Rhamnulose-1-phosphate aldolase (275 aa).

Residue E117 is part of the active site. Positions 141, 143, and 212 each coordinate Zn(2+).

It belongs to the aldolase class II family. RhaD subfamily. In terms of assembly, homotetramer. The cofactor is Zn(2+).

It is found in the cytoplasm. It catalyses the reaction L-rhamnulose 1-phosphate = (S)-lactaldehyde + dihydroxyacetone phosphate. It participates in carbohydrate degradation; L-rhamnose degradation; glycerone phosphate from L-rhamnose: step 3/3. Functionally, catalyzes the reversible cleavage of L-rhamnulose-1-phosphate to dihydroxyacetone phosphate (DHAP) and L-lactaldehyde. In Salmonella heidelberg (strain SL476), this protein is Rhamnulose-1-phosphate aldolase.